The following is a 131-amino-acid chain: D-ribose pyranase (131 aa).

The active-site Proton donor is His20. Substrate-binding positions include Asp28, His98, and 120–122 (YAN).

Belongs to the RbsD / FucU family. RbsD subfamily. Homodecamer.

The protein localises to the cytoplasm. The enzyme catalyses beta-D-ribopyranose = beta-D-ribofuranose. It participates in carbohydrate metabolism; D-ribose degradation; D-ribose 5-phosphate from beta-D-ribopyranose: step 1/2. Its function is as follows. Catalyzes the interconversion of beta-pyran and beta-furan forms of D-ribose. This Bacillus cereus (strain ATCC 10987 / NRS 248) protein is D-ribose pyranase.